Reading from the N-terminus, the 247-residue chain is uncharacterized protein (247 aa).

Transmembrane regions (helical) follow at residues Leu11–Val31 and Phe39–Leu59.

It localises to the cell membrane. This is an uncharacterized protein from Haemophilus influenzae (strain ATCC 51907 / DSM 11121 / KW20 / Rd).